Here is a 605-residue protein sequence, read N- to C-terminus: Pescadillo homolog (605 aa).

The BRCT domain maps to 346–440 (PVATLFSEFV…ELVPANLYLP (95 aa)). Positions 449 to 553 (SPWGDSTGYD…RKATEEEEEK (105 aa)) are disordered. Acidic residues predominate over residues 461–508 (AENDEDVEGSDAEEIDESADEDAESEEVEEDDTAAVALNEDDEDDEDE). Over residues 526 to 537 (EAKDVIDSESSD) the composition is skewed to basic and acidic residues. Residues 533–605 (SESSDKKKKK…KAKLAKLDKK (73 aa)) adopt a coiled-coil conformation.

This sequence belongs to the pescadillo family. Component of the NOP7 complex, composed of ERB1, NOP7 and YTM1. The complex is held together by ERB1, which interacts with NOP7 via its N-terminal domain and with YTM1 via a high-affinity interaction between the seven-bladed beta-propeller domains of the 2 proteins. The NOP7 complex associates with the 66S pre-ribosome.

It localises to the nucleus. It is found in the nucleolus. The protein localises to the nucleoplasm. Component of the NOP7 complex, which is required for maturation of the 25S and 5.8S ribosomal RNAs and formation of the 60S ribosome. This is Pescadillo homolog from Kluyveromyces lactis (strain ATCC 8585 / CBS 2359 / DSM 70799 / NBRC 1267 / NRRL Y-1140 / WM37) (Yeast).